The following is a 179-amino-acid chain: Large ribosomal subunit protein uL5 (179 aa).

The protein belongs to the universal ribosomal protein uL5 family. In terms of assembly, part of the 50S ribosomal subunit; part of the 5S rRNA/L5/L18/L25 subcomplex. Contacts the 5S rRNA and the P site tRNA. Forms a bridge to the 30S subunit in the 70S ribosome.

Functionally, this is one of the proteins that bind and probably mediate the attachment of the 5S RNA into the large ribosomal subunit, where it forms part of the central protuberance. In the 70S ribosome it contacts protein S13 of the 30S subunit (bridge B1b), connecting the 2 subunits; this bridge is implicated in subunit movement. Contacts the P site tRNA; the 5S rRNA and some of its associated proteins might help stabilize positioning of ribosome-bound tRNAs. This Acidovorax ebreus (strain TPSY) (Diaphorobacter sp. (strain TPSY)) protein is Large ribosomal subunit protein uL5.